A 175-amino-acid chain; its full sequence is MANLKSLPVGDKAPEVVHMVIEVPRGSGNKYEYDPDLGAIKLDRVLPGAQFYPGDYGFIPSTLAEDGDPLDGLVLSTYPLLPGVVVEVRVVGLLLMEDEKGGDAKVIGVVAEDQRLDHIQDIGDVPEGVKQEIQHFFETYKALEAKKGKWVKVTGWRDRKAALEEVRACIARYKG.

Lys-30, Arg-44, and Tyr-56 together coordinate substrate. Mg(2+)-binding residues include Asp-66, Asp-71, and Asp-103. Tyr-140 is a binding site for substrate.

It belongs to the PPase family. As to quaternary structure, homohexamer. Requires Mg(2+) as cofactor.

The protein localises to the cytoplasm. The enzyme catalyses diphosphate + H2O = 2 phosphate + H(+). In terms of biological role, catalyzes the hydrolysis of inorganic pyrophosphate (PPi) forming two phosphate ions. This chain is Inorganic pyrophosphatase, found in Thermus thermophilus (strain ATCC 27634 / DSM 579 / HB8).